Here is a 515-residue protein sequence, read N- to C-terminus: Bifunctional purine biosynthesis protein PurH (515 aa).

Residues 1–145 (MTKRALISVS…KNHASVTVVV (145 aa)) form the MGS-like domain.

It belongs to the PurH family.

It carries out the reaction (6R)-10-formyltetrahydrofolate + 5-amino-1-(5-phospho-beta-D-ribosyl)imidazole-4-carboxamide = 5-formamido-1-(5-phospho-D-ribosyl)imidazole-4-carboxamide + (6S)-5,6,7,8-tetrahydrofolate. The catalysed reaction is IMP + H2O = 5-formamido-1-(5-phospho-D-ribosyl)imidazole-4-carboxamide. It participates in purine metabolism; IMP biosynthesis via de novo pathway; 5-formamido-1-(5-phospho-D-ribosyl)imidazole-4-carboxamide from 5-amino-1-(5-phospho-D-ribosyl)imidazole-4-carboxamide (10-formyl THF route): step 1/1. Its pathway is purine metabolism; IMP biosynthesis via de novo pathway; IMP from 5-formamido-1-(5-phospho-D-ribosyl)imidazole-4-carboxamide: step 1/1. This is Bifunctional purine biosynthesis protein PurH from Streptococcus suis.